The primary structure comprises 473 residues: Keratin, type I cuticular Ha6 (473 aa).

Residues 1–93 (MATQICTPTF…FCEGAFNGNE (93 aa)) are head. Residues 93-404 (EKATMQILND…RLLDGEDCKL (312 aa)) form the IF rod domain. The interval 94-128 (KATMQILNDRLANYLEKVRQLEQENTQLECRIREW) is coil 1A. The tract at residues 129–139 (YECQIPYICPD) is linker 1. The coil 1B stretch occupies residues 140–240 (YQSYFKTAEE…HEEEVNALRS (101 aa)). Positions 241-256 (QLGDRLNVEVDAAPPV) are linker 12. The tract at residues 257-400 (DLNKILDDMR…ATYRRLLDGE (144 aa)) is coil 2. The interval 401-473 (DCKLPAHPCS…SREHVVPRAM (73 aa)) is tail.

It belongs to the intermediate filament family. Heterotetramer of two type I and two type II keratins. As to expression, in skin, only expressed in the suprabasal cells of tail scale epidermis. Suprabasally expressed in stratified squamous epithelia and also in the posterior unit of the complex filiform papillae of tongue. Expressed in rare anatomical sites in which an orthokeratinized stratum corneum would be too soft and a hard keratinized structure would be too rigid to meet the functional requirement of the respective epithelia.

The sequence is that of Keratin, type I cuticular Ha6 from Mus musculus (Mouse).